We begin with the raw amino-acid sequence, 256 residues long: Imidazole glycerol phosphate synthase subunit HisF (256 aa).

Catalysis depends on residues D12 and D131.

Belongs to the HisA/HisF family. In terms of assembly, heterodimer of HisH and HisF.

It localises to the cytoplasm. It carries out the reaction 5-[(5-phospho-1-deoxy-D-ribulos-1-ylimino)methylamino]-1-(5-phospho-beta-D-ribosyl)imidazole-4-carboxamide + L-glutamine = D-erythro-1-(imidazol-4-yl)glycerol 3-phosphate + 5-amino-1-(5-phospho-beta-D-ribosyl)imidazole-4-carboxamide + L-glutamate + H(+). It participates in amino-acid biosynthesis; L-histidine biosynthesis; L-histidine from 5-phospho-alpha-D-ribose 1-diphosphate: step 5/9. Its function is as follows. IGPS catalyzes the conversion of PRFAR and glutamine to IGP, AICAR and glutamate. The HisF subunit catalyzes the cyclization activity that produces IGP and AICAR from PRFAR using the ammonia provided by the HisH subunit. The chain is Imidazole glycerol phosphate synthase subunit HisF from Pseudomonas entomophila (strain L48).